Here is a 91-residue protein sequence, read N- to C-terminus: Molybdopterin synthase sulfur carrier subunit (91 aa).

Gly91 is subject to 1-thioglycine; alternate. Gly91 is modified (glycyl adenylate; alternate).

This sequence belongs to the MoaD family. MOCS2A subfamily. In terms of assembly, heterotetramer; composed of 2 small (MOCS2A) and 2 large (MOCS2B) subunits. Post-translationally, C-terminal thiocarboxylation occurs in 2 steps, it is first acyl-adenylated (-COAMP) via the hesA/moeB/thiF part of uba4, then thiocarboxylated (-COSH) via the rhodanese domain of uba4.

Its subcellular location is the cytoplasm. It participates in cofactor biosynthesis; molybdopterin biosynthesis. Acts as a sulfur carrier required for molybdopterin biosynthesis. Component of the molybdopterin synthase complex that catalyzes the conversion of precursor Z into molybdopterin by mediating the incorporation of 2 sulfur atoms into precursor Z to generate a dithiolene group. In the complex, serves as sulfur donor by being thiocarboxylated (-COSH) at its C-terminus by uba4. After interaction with MOCS2B, the sulfur is then transferred to precursor Z to form molybdopterin. In Emericella nidulans (strain FGSC A4 / ATCC 38163 / CBS 112.46 / NRRL 194 / M139) (Aspergillus nidulans), this protein is Molybdopterin synthase sulfur carrier subunit.